Reading from the N-terminus, the 212-residue chain is ATP-dependent dethiobiotin synthetase BioD (212 aa).

10 to 15 (GVGKTF) lines the ATP pocket. Threonine 14 provides a ligand contact to Mg(2+). The active site involves lysine 36. Serine 40 contacts substrate. ATP is bound by residues aspartate 45, 106–109 (EGAG), and 167–168 (NC). Positions 45 and 106 each coordinate Mg(2+).

It belongs to the dethiobiotin synthetase family. In terms of assembly, homodimer. Requires Mg(2+) as cofactor.

It is found in the cytoplasm. It catalyses the reaction (7R,8S)-7,8-diammoniononanoate + CO2 + ATP = (4R,5S)-dethiobiotin + ADP + phosphate + 3 H(+). Its pathway is cofactor biosynthesis; biotin biosynthesis; biotin from 7,8-diaminononanoate: step 1/2. In terms of biological role, catalyzes a mechanistically unusual reaction, the ATP-dependent insertion of CO2 between the N7 and N8 nitrogen atoms of 7,8-diaminopelargonic acid (DAPA, also called 7,8-diammoniononanoate) to form a ureido ring. This Methanococcus aeolicus (strain ATCC BAA-1280 / DSM 17508 / OCM 812 / Nankai-3) protein is ATP-dependent dethiobiotin synthetase BioD.